The sequence spans 207 residues: uncharacterized protein (207 aa).

Active-site residues include Arg80, Glu88, and Arg148.

This sequence belongs to the thermonuclease family.

This is an uncharacterized protein from Methanocaldococcus jannaschii (strain ATCC 43067 / DSM 2661 / JAL-1 / JCM 10045 / NBRC 100440) (Methanococcus jannaschii).